Here is a 547-residue protein sequence, read N- to C-terminus: GMP synthase [glutamine-hydrolyzing] (547 aa).

One can recognise a Glutamine amidotransferase type-1 domain in the interval 12–210 (KVLILDFGSQ…VLEIAGAKPD (199 aa)). The Nucleophile role is filled by cysteine 89. Active-site residues include histidine 184 and glutamate 186. One can recognise a GMPS ATP-PPase domain in the interval 211-403 (WIMRDHIEEA…LGLPPEMVYR (193 aa)). 238–244 (SGGVDSS) is a binding site for ATP.

As to quaternary structure, homodimer.

The enzyme catalyses XMP + L-glutamine + ATP + H2O = GMP + L-glutamate + AMP + diphosphate + 2 H(+). The protein operates within purine metabolism; GMP biosynthesis; GMP from XMP (L-Gln route): step 1/1. Functionally, catalyzes the synthesis of GMP from XMP. This Ralstonia nicotianae (strain ATCC BAA-1114 / GMI1000) (Ralstonia solanacearum) protein is GMP synthase [glutamine-hydrolyzing].